We begin with the raw amino-acid sequence, 242 residues long: Ribonuclease 3 (242 aa).

The RNase III domain occupies 10–146 (LQNFNKKFAD…FVGALYLDQG (137 aa)). Glu59 contributes to the Mg(2+) binding site. Asp63 is a catalytic residue. 2 residues coordinate Mg(2+): Asp132 and Glu135. The active site involves Glu135. Residues 172-241 (DFKTQFQELI…AEKAYNDMKK (70 aa)) enclose the DRBM domain. Positions 216-242 (VAKGQGRTKKESEQKAAEKAYNDMKKK) are disordered. Over residues 223 to 242 (TKKESEQKAAEKAYNDMKKK) the composition is skewed to basic and acidic residues.

The protein belongs to the ribonuclease III family. In terms of assembly, homodimer. It depends on Mg(2+) as a cofactor.

The protein resides in the cytoplasm. The enzyme catalyses Endonucleolytic cleavage to 5'-phosphomonoester.. Its function is as follows. Digests double-stranded RNA. Involved in the processing of primary rRNA transcript to yield the immediate precursors to the large and small rRNAs (23S and 16S). Processes some mRNAs, and tRNAs when they are encoded in the rRNA operon. Processes pre-crRNA and tracrRNA of type II CRISPR loci if present in the organism. This chain is Ribonuclease 3, found in Staphylococcus carnosus (strain TM300).